Here is a 507-residue protein sequence, read N- to C-terminus: Bifunctional purine biosynthesis protein PurH (507 aa).

Residues methionine 1–valine 144 enclose the MGS-like domain.

It belongs to the PurH family.

The catalysed reaction is (6R)-10-formyltetrahydrofolate + 5-amino-1-(5-phospho-beta-D-ribosyl)imidazole-4-carboxamide = 5-formamido-1-(5-phospho-D-ribosyl)imidazole-4-carboxamide + (6S)-5,6,7,8-tetrahydrofolate. It catalyses the reaction IMP + H2O = 5-formamido-1-(5-phospho-D-ribosyl)imidazole-4-carboxamide. It functions in the pathway purine metabolism; IMP biosynthesis via de novo pathway; 5-formamido-1-(5-phospho-D-ribosyl)imidazole-4-carboxamide from 5-amino-1-(5-phospho-D-ribosyl)imidazole-4-carboxamide (10-formyl THF route): step 1/1. It participates in purine metabolism; IMP biosynthesis via de novo pathway; IMP from 5-formamido-1-(5-phospho-D-ribosyl)imidazole-4-carboxamide: step 1/1. The protein is Bifunctional purine biosynthesis protein PurH of Lacticaseibacillus paracasei (strain ATCC 334 / BCRC 17002 / CCUG 31169 / CIP 107868 / KCTC 3260 / NRRL B-441) (Lactobacillus paracasei).